The following is a 122-amino-acid chain: Large ribosomal subunit protein uL14 (122 aa).

Belongs to the universal ribosomal protein uL14 family. As to quaternary structure, part of the 50S ribosomal subunit. Forms a cluster with proteins L3 and L19. In the 70S ribosome, L14 and L19 interact and together make contacts with the 16S rRNA in bridges B5 and B8.

Binds to 23S rRNA. Forms part of two intersubunit bridges in the 70S ribosome. This Stutzerimonas stutzeri (strain A1501) (Pseudomonas stutzeri) protein is Large ribosomal subunit protein uL14.